The sequence spans 429 residues: MEIVFEDFQKALSKIKLLRENANIIEETVQRNVSEIVRNVRESGDEALSFYTKKFDGVKIKEFRVSEEEEKRASMFVENSFLEALQEAKKNIISYHEKQKRQSMFDCASEGIIRGQIIRPLENVGVYVPGGTASYPSSVLMNVLPAKLAGVKKIVMVTPPREGGIDPHILVAASLAGVDEIYTIGGAQAIAALAYGTESIPKVDKIVGPGNLYVALAKREVYGIVNIDMIAGPSEIVVIADETGNAKYIAADLLSQAEHDERATAICITTNIELAKKVEKEIERQLETLPRSEIARESINRNGAIFIVPSIDEALQLSNEIAPEHLELHIKEPMNALAYVKHAGSIFLGPYAPEPLGDYLAGPNHVLPTSGTARFFSPLSVDDFVKKSSFLSYTEEALRDVQHHIVELANKEGLHAHARAIQIRFEEEE.

Residues Y127, Q188, and N211 each coordinate NAD(+). Substrate contacts are provided by S234, Q256, and H259. 2 residues coordinate Zn(2+): Q256 and H259. Catalysis depends on proton acceptor residues E324 and H325. 4 residues coordinate substrate: H325, D358, E412, and H417. Zn(2+) is bound at residue D358. H417 contributes to the Zn(2+) binding site.

Belongs to the histidinol dehydrogenase family. The cofactor is Zn(2+).

The enzyme catalyses L-histidinol + 2 NAD(+) + H2O = L-histidine + 2 NADH + 3 H(+). The protein operates within amino-acid biosynthesis; L-histidine biosynthesis; L-histidine from 5-phospho-alpha-D-ribose 1-diphosphate: step 9/9. Its function is as follows. Catalyzes the sequential NAD-dependent oxidations of L-histidinol to L-histidinaldehyde and then to L-histidine. The protein is Histidinol dehydrogenase of Bacillus cereus (strain ATCC 10987 / NRS 248).